The sequence spans 485 residues: U4/U6 small nuclear ribonucleoprotein Prp31 homolog (485 aa).

Disordered regions lie at residues 1–36 (MATL…EEDV) and 329–361 (IEKW…RRLR). Residues 11-36 (DLDELSDNEAELDENDGDVGKEEEDV) are compositionally biased toward acidic residues. A Nop domain is found at 216–334 (IAPNLSAIVG…IRKKIEKWQE (119 aa)). The segment covering 334 to 348 (EPPPARQPKPLPVPD) has biased composition (pro residues). Over residues 352–361 (KKRRGGRRLR) the composition is skewed to basic residues. The short motif at 352 to 365 (KKRRGGRRLRKMKE) is the Nuclear localization signal element.

This sequence belongs to the PRP31 family. In terms of assembly, component of the U4/U6-U5 tri-snRNP complex composed of the U4, U6 and U5 snRNAs and pre-mRNA-splicing factors. Interacts with STA1 and SOP1.

It is found in the nucleus. It localises to the cajal body. In terms of biological role, involved in pre-mRNA splicing. Required for the assembly of the U4/U5/U6 tri-snRNP complex, one of the building blocks of the spliceosome. Functions in association with STA1 and ZOP1 in spliceosome dynamics and pre-mRNA splicing. Required for transcriptional regulation and pre-mRNA splicing of cold-responsive genes, such as LTI78/RD29A, KIN2/COR6.6 or COR15A, especially under cold stress. May play a role in stress response. Involved in transcriptional gene silencing of endogenous transposable elements, independently of the RNA-directed DNA methylation (RdDM) pathway. Seems not to participate in the small RNA biogenesis of the RdDM pathway. In Arabidopsis thaliana (Mouse-ear cress), this protein is U4/U6 small nuclear ribonucleoprotein Prp31 homolog.